A 610-amino-acid chain; its full sequence is Elongation factor 4 (610 aa).

Positions 15–197 (KSIRNFSIIA…RIINDIPYPK (183 aa)) constitute a tr-type G domain. GTP is bound by residues 27-32 (DHGKST) and 144-147 (NKID).

Belongs to the TRAFAC class translation factor GTPase superfamily. Classic translation factor GTPase family. LepA subfamily.

The protein resides in the cell membrane. The catalysed reaction is GTP + H2O = GDP + phosphate + H(+). Required for accurate and efficient protein synthesis under certain stress conditions. May act as a fidelity factor of the translation reaction, by catalyzing a one-codon backward translocation of tRNAs on improperly translocated ribosomes. Back-translocation proceeds from a post-translocation (POST) complex to a pre-translocation (PRE) complex, thus giving elongation factor G a second chance to translocate the tRNAs correctly. Binds to ribosomes in a GTP-dependent manner. The protein is Elongation factor 4 of Buchnera aphidicola subsp. Acyrthosiphon pisum (strain 5A).